Consider the following 438-residue polypeptide: uncharacterized protein (438 aa).

K273 bears the N6-(pyridoxal phosphate)lysine mark.

It belongs to the class-III pyridoxal-phosphate-dependent aminotransferase family. Pyridoxal 5'-phosphate is required as a cofactor.

The protein resides in the mitochondrion. This is an uncharacterized protein from Schizosaccharomyces pombe (strain 972 / ATCC 24843) (Fission yeast).